The sequence spans 533 residues: NAD(P)H-quinone oxidoreductase chain 4 1 (533 aa).

The next 14 helical transmembrane spans lie at 6 to 26 (FPWL…IPLI), 37 to 57 (YSLF…WQHF), 87 to 107 (LSMP…LASW), 113 to 133 (PKLF…VFTA), 137 to 157 (MLFF…ISIW), 169 to 189 (FILY…ALAF), 209 to 229 (WLEL…LSIF), 243 to 263 (NAPG…YALI), 277 to 297 (FAPV…LNAF), 311 to 331 (ISHM…GLNG), 332 to 352 (ALLQ…LAGV), 376 to 396 (FALF…SGFV), 417 to 437 (VTIL…LSML), and 461 to 481 (LFVA…PKLT).

The protein belongs to the complex I subunit 4 family.

The protein resides in the cellular thylakoid membrane. The catalysed reaction is a plastoquinone + NADH + (n+1) H(+)(in) = a plastoquinol + NAD(+) + n H(+)(out). It catalyses the reaction a plastoquinone + NADPH + (n+1) H(+)(in) = a plastoquinol + NADP(+) + n H(+)(out). Its function is as follows. NDH-1 shuttles electrons from NAD(P)H, via FMN and iron-sulfur (Fe-S) centers, to quinones in the respiratory chain. The immediate electron acceptor for the enzyme in this species is believed to be plastoquinone. Couples the redox reaction to proton translocation (for every two electrons transferred, four hydrogen ions are translocated across the cytoplasmic membrane), and thus conserves the redox energy in a proton gradient. This chain is NAD(P)H-quinone oxidoreductase chain 4 1, found in Synechococcus elongatus (strain ATCC 33912 / PCC 7942 / FACHB-805) (Anacystis nidulans R2).